The following is a 339-amino-acid chain: NADH-quinone oxidoreductase subunit H (339 aa).

8 consecutive transmembrane segments (helical) span residues 7 to 27 (LFWI…AVAY), 77 to 97 (VLFV…WAVI), 112 to 132 (LLYI…AGWA), 149 to 169 (VVSY…AAGS), 180 to 200 (AGGI…VYWI), 235 to 255 (VFFL…AVMF), 276 to 296 (VPGV…YLWF), and 315 to 335 (VLIP…VTGF).

Belongs to the complex I subunit 1 family. NDH-1 is composed of 14 different subunits. Subunits NuoA, H, J, K, L, M, N constitute the membrane sector of the complex.

Its subcellular location is the cell inner membrane. The enzyme catalyses a quinone + NADH + 5 H(+)(in) = a quinol + NAD(+) + 4 H(+)(out). Its function is as follows. NDH-1 shuttles electrons from NADH, via FMN and iron-sulfur (Fe-S) centers, to quinones in the respiratory chain. The immediate electron acceptor for the enzyme in this species is believed to be ubiquinone. Couples the redox reaction to proton translocation (for every two electrons transferred, four hydrogen ions are translocated across the cytoplasmic membrane), and thus conserves the redox energy in a proton gradient. This subunit may bind ubiquinone. The protein is NADH-quinone oxidoreductase subunit H of Alkalilimnicola ehrlichii (strain ATCC BAA-1101 / DSM 17681 / MLHE-1).